Reading from the N-terminus, the 197-residue chain is Cytochrome c biogenesis ATP-binding export protein CcmA (197 aa).

Residues 1–196 form the ABC transporter domain; it reads MSMLSLHQLQ…VIKSAQILQL (196 aa). Position 35 to 42 (35 to 42) interacts with ATP; that stretch reads GANGSGKS.

The protein belongs to the ABC transporter superfamily. CcmA exporter (TC 3.A.1.107) family. The complex is composed of two ATP-binding proteins (CcmA) and two transmembrane proteins (CcmB).

The protein localises to the cell inner membrane. The catalysed reaction is heme b(in) + ATP + H2O = heme b(out) + ADP + phosphate + H(+). Part of the ABC transporter complex CcmAB involved in the biogenesis of c-type cytochromes; once thought to export heme, this seems not to be the case, but its exact role is uncertain. Responsible for energy coupling to the transport system. The polypeptide is Cytochrome c biogenesis ATP-binding export protein CcmA (Rickettsia typhi (strain ATCC VR-144 / Wilmington)).